A 505-amino-acid chain; its full sequence is MDKLQRDGKEDTPRQRRFLYPLLFQEDLYAIAYDHYFNRSSSFEPMENSSSNDRFSFLTVKRLISRIRQQNGSIVPFVNCDQTQLVGHNRSFYSELVLGGLTAVPEVPFSIRSKHSLERMNEWTSFRSIHSIFPLMEDKIPHSNFILDIRIPHLTHPEILVRTFRRWIQDAPSLHSLRSVLHEHRNLIISSNLDQLILIASKENTRLSLFLWNYYAYECESLLVPLWKRFSYSRSLPYESFIERTPFYRKIEHIVIFYHKYLKKSLWFLKDPSIHYVKHRERSIIALRGTYLLAKKWRYHITNFWQCHFHLWPQPYRIYIDELSNNWFSFLGYLLSVKMKTSVVRIKMLDDSFITDLITKKFDPIAPTTLLIGSLAKEKFCDISGHPISRLAWTGLTDDDILDRFDQIWRNIFHYHSGSSKKDGLYRIKYILRLPCAKTLACKHKSAIRVVRERFGSELFTKSSPKERESIFLSFSKTRSQRERIWHSDIIQRNPLINSCRKKHN.

This sequence belongs to the intron maturase 2 family. MatK subfamily.

It is found in the plastid. The protein localises to the chloroplast. Functionally, usually encoded in the trnK tRNA gene intron. Probably assists in splicing its own and other chloroplast group II introns. This chain is Maturase K, found in Dioon edule (Virgin's palm).